The chain runs to 212 residues: F420-dependent NADP reductase (212 aa).

Residues 9–12 (TGNL), 31–32 (SR), K36, I72, H76, V98, and A137 contribute to the NADP(+) site. A coenzyme F420-(gamma-Glu)n-binding site is contributed by L207.

Belongs to the F420-dependent NADP reductase family. In terms of assembly, homodimer.

The catalysed reaction is reduced coenzyme F420-(gamma-L-Glu)(n) + NADP(+) = oxidized coenzyme F420-(gamma-L-Glu)(n) + NADPH + 2 H(+). Its function is as follows. Catalyzes the reversible reduction of NADP(+) by F420H(2). In this reaction the proS hydrogen at C5 of F420 is transferred into the proS position at C4 of NADPH. This chain is F420-dependent NADP reductase (fno), found in Archaeoglobus fulgidus (strain ATCC 49558 / DSM 4304 / JCM 9628 / NBRC 100126 / VC-16).